Here is an 82-residue protein sequence, read N- to C-terminus: uncharacterized protein (82 aa).

Residues 11 to 82 (NVGIYVRVST…HIEQGIMTHC (72 aa)) form the Resolvase/invertase-type recombinase catalytic domain. The active-site O-(5'-phospho-DNA)-serine intermediate is the Ser19.

It belongs to the site-specific recombinase resolvase family.

This is an uncharacterized protein from Bacillus phage phi105 (Bacteriophage phi-105).